The following is a 150-amino-acid chain: 3-dehydroquinate dehydratase (150 aa).

Tyr22 serves as the catalytic Proton acceptor. Substrate contacts are provided by Asn73, His79, and Asp86. His99 acts as the Proton donor in catalysis. Substrate contacts are provided by residues 100-101 (LS) and Arg110.

This sequence belongs to the type-II 3-dehydroquinase family. Homododecamer.

It catalyses the reaction 3-dehydroquinate = 3-dehydroshikimate + H2O. It functions in the pathway metabolic intermediate biosynthesis; chorismate biosynthesis; chorismate from D-erythrose 4-phosphate and phosphoenolpyruvate: step 3/7. Functionally, catalyzes a trans-dehydration via an enolate intermediate. The sequence is that of 3-dehydroquinate dehydratase from Dinoroseobacter shibae (strain DSM 16493 / NCIMB 14021 / DFL 12).